The following is a 299-amino-acid chain: Taste receptor type 2 member 50 (299 aa).

Position 1 (M1) is a topological domain, extracellular. The helical transmembrane segment at 2 to 22 (ITFLYIFFSILIMVLFVLGNF) threads the bilayer. Over 23 to 55 (ANGFIALVNFIDWVKRKKISSADQILTALAVSR) the chain is Cytoplasmic. The helical transmembrane segment at 56–76 (IGLLWALLLNWYLTVLNPAFY) threads the bilayer. Topologically, residues 77 to 87 (SVELRITSYNA) are extracellular. Residues 88 to 108 (WVVTNHFSMWLAANLSIFYLL) traverse the membrane as a helical segment. Over 109-126 (KIANFSNLLFLHLKRRVR) the chain is Cytoplasmic. A helical transmembrane segment spans residues 127–147 (SVILVILLGTLIFLVCHLLVA). Residues 148–181 (NMDESMWAEEYEGNMTGKMKLRNTVHLSYLTVTT) lie on the Extracellular side of the membrane. N-linked (GlcNAc...) asparagine glycosylation is present at N161. The helical transmembrane segment at 182 to 202 (LWSFIPFTLSLISFLMLICSL) threads the bilayer. Topologically, residues 203-229 (CKHLKKMQLHGEGSQDLSTKVHIKALQ) are cytoplasmic. Residues 230-250 (TLISFLLLCAIFFLFLIVSVW) form a helical membrane-spanning segment. At 251-259 (SPRRLRNDP) the chain is on the extracellular side. Residues 260–280 (VVMVSKAVGNIYLAFDSFILI) traverse the membrane as a helical segment. The Cytoplasmic segment spans residues 281 to 299 (WRTKKLKHTFLLILCQIRC).

The protein belongs to the G-protein coupled receptor T2R family. Expressed in subsets of taste receptor cells of the tongue and exclusively in gustducin-positive cells.

It is found in the membrane. Its function is as follows. Receptor that may play a role in the perception of bitterness and is gustducin-linked. May play a role in sensing the chemical composition of the gastrointestinal content. The activity of this receptor may stimulate alpha gustducin, mediate PLC-beta-2 activation and lead to the gating of TRPM5. The chain is Taste receptor type 2 member 50 (TAS2R50) from Homo sapiens (Human).